The primary structure comprises 251 residues: Triosephosphate isomerase (251 aa).

9 to 11 (NWK) contributes to the substrate binding site. His-95 acts as the Electrophile in catalysis. Residue Glu-167 is the Proton acceptor of the active site. Substrate is bound by residues Gly-173, Ser-212, and 233–234 (GG).

The protein belongs to the triosephosphate isomerase family. As to quaternary structure, homodimer.

It is found in the cytoplasm. The catalysed reaction is D-glyceraldehyde 3-phosphate = dihydroxyacetone phosphate. The protein operates within carbohydrate biosynthesis; gluconeogenesis. It participates in carbohydrate degradation; glycolysis; D-glyceraldehyde 3-phosphate from glycerone phosphate: step 1/1. In terms of biological role, involved in the gluconeogenesis. Catalyzes stereospecifically the conversion of dihydroxyacetone phosphate (DHAP) to D-glyceraldehyde-3-phosphate (G3P). This is Triosephosphate isomerase from Pseudomonas putida (strain ATCC 700007 / DSM 6899 / JCM 31910 / BCRC 17059 / LMG 24140 / F1).